The primary structure comprises 189 residues: Small ribosomal subunit protein uS7 (189 aa).

Belongs to the universal ribosomal protein uS7 family. As to quaternary structure, part of the 30S ribosomal subunit.

Its function is as follows. One of the primary rRNA binding proteins, it binds directly to 16S rRNA where it nucleates assembly of the head domain of the 30S subunit. Is located at the subunit interface close to the decoding center. The chain is Small ribosomal subunit protein uS7 from Methanosarcina acetivorans (strain ATCC 35395 / DSM 2834 / JCM 12185 / C2A).